The following is a 91-amino-acid chain: ATP-dependent Clp protease adapter protein ClpS (91 aa).

It belongs to the ClpS family. In terms of assembly, binds to the N-terminal domain of the chaperone ClpA.

Its function is as follows. Involved in the modulation of the specificity of the ClpAP-mediated ATP-dependent protein degradation. This is ATP-dependent Clp protease adapter protein ClpS from Helicobacter pylori (strain ATCC 700392 / 26695) (Campylobacter pylori).